Here is a 25-residue protein sequence, read N- to C-terminus: Small ribosomal subunit protein uS19 (25 aa).

The segment at 1 to 25 (GHKLGEFAPTRTFRGHKKEDKKVKR) is disordered.

It belongs to the universal ribosomal protein uS19 family.

Protein S19 forms a complex with S13 that binds strongly to the 16S ribosomal RNA. In Acholeplasma laidlawii, this protein is Small ribosomal subunit protein uS19 (rpsS).